The following is an 89-amino-acid chain: Probable Fe(2+)-trafficking protein (89 aa).

Belongs to the Fe(2+)-trafficking protein family.

Its function is as follows. Could be a mediator in iron transactions between iron acquisition and iron-requiring processes, such as synthesis and/or repair of Fe-S clusters in biosynthetic enzymes. The polypeptide is Probable Fe(2+)-trafficking protein (Legionella pneumophila (strain Paris)).